Reading from the N-terminus, the 445-residue chain is Exodeoxyribonuclease 7 large subunit (445 aa).

Belongs to the XseA family. As to quaternary structure, heterooligomer composed of large and small subunits.

It is found in the cytoplasm. The catalysed reaction is Exonucleolytic cleavage in either 5'- to 3'- or 3'- to 5'-direction to yield nucleoside 5'-phosphates.. Functionally, bidirectionally degrades single-stranded DNA into large acid-insoluble oligonucleotides, which are then degraded further into small acid-soluble oligonucleotides. The sequence is that of Exodeoxyribonuclease 7 large subunit from Staphylococcus aureus (strain USA300 / TCH1516).